Here is a 432-residue protein sequence, read N- to C-terminus: Pachytene checkpoint protein 2 homolog (432 aa).

Residue 179 to 186 (GPPGTGKT) coordinates ATP.

Belongs to the AAA ATPase family. PCH2 subfamily.

Plays a key role in chromosome recombination and chromosome structure development during meiosis. Required at early steps in meiotic recombination that leads to non-crossovers pathways. Also needed for efficient completion of homologous synapsis by influencing crossover distribution along the chromosomes affecting both crossovers and non-crossovers pathways. This Gallus gallus (Chicken) protein is Pachytene checkpoint protein 2 homolog (TRIP13).